The chain runs to 217 residues: 2-phospho-L-lactate guanylyltransferase (217 aa).

The protein belongs to the CofC family. In terms of assembly, homodimer.

The enzyme catalyses (2S)-2-phospholactate + GTP + H(+) = (2S)-lactyl-2-diphospho-5'-guanosine + diphosphate. It functions in the pathway cofactor biosynthesis; coenzyme F420 biosynthesis. Functionally, guanylyltransferase that catalyzes the activation of (2S)-2-phospholactate (2-PL) as (2S)-lactyl-2-diphospho-5'-guanosine, via the condensation of 2-PL with GTP. It is involved in the biosynthesis of coenzyme F420, a hydride carrier cofactor. This is 2-phospho-L-lactate guanylyltransferase from Halorubrum lacusprofundi (strain ATCC 49239 / DSM 5036 / JCM 8891 / ACAM 34).